We begin with the raw amino-acid sequence, 545 residues long: MTTRYIFVTGGVVSSLGKGIAAASLAAILEARGLNVTIMKLDPYINLDPGTMSPTQHGEVFVTEDGAETDLDLGHYERFIRTKMNRRNNFTTGRIYEEVLRKERRGDYLGATIQVIPHITNAIKEKVLEGGEGHDVAIVEIGGTVGDIESLPFLESIRQLGVELGRDRTLFMHLTLVPFLGAAGEVKTKPTQHSVKELRSIGIAPDVLVCRGDRAIPSNEKAKISLFCNVEERAVISLKDVDSIYKIPALLKAQGLDDLVTKRFGLECREADLSEWENVIYQEANPTGEVTIGMVGKYTELPDAYKSVNEALKHAGLFNRVSVNIKYIDSQNIEAKGTEVLEGLDGILVPGGFGERGVEGKIMAAQYARENNLPYFGICLGMQVALIEFARHVAGLENAHSTEFNKDTPHPVVGLITEWIDEKGNIEQRHEESDLGGTMRLGAQLCHLIEGTKAAEAYKGLTCVERHRHRYEVNNTYRERLEKAGLVFSGLSTDRQLVEMIELPNHPWFVAGQFHPEFTSTPRDGQPLFQGFVAAAVAYQKRDLG.

The amidoligase domain stretch occupies residues 1 to 266 (MTTRYIFVTG…DDLVTKRFGL (266 aa)). Serine 14 serves as a coordination point for CTP. UTP is bound at residue serine 14. ATP contacts are provided by residues 15-20 (SLGKGI) and aspartate 72. Residues aspartate 72 and glutamate 140 each coordinate Mg(2+). Residues 147–149 (DIE), 187–192 (KTKPTQ), and lysine 223 contribute to the CTP site. UTP contacts are provided by residues 187–192 (KTKPTQ) and lysine 223. 239–241 (KDV) is a binding site for ATP. Positions 291–542 (TIGMVGKYTE…VAAAVAYQKR (252 aa)) constitute a Glutamine amidotransferase type-1 domain. An L-glutamine-binding site is contributed by glycine 352. The active-site Nucleophile; for glutamine hydrolysis is cysteine 379. L-glutamine contacts are provided by residues 380-383 (LGMQ), glutamate 403, and arginine 470. Catalysis depends on residues histidine 515 and glutamate 517.

It belongs to the CTP synthase family. As to quaternary structure, homotetramer.

It catalyses the reaction UTP + L-glutamine + ATP + H2O = CTP + L-glutamate + ADP + phosphate + 2 H(+). The catalysed reaction is L-glutamine + H2O = L-glutamate + NH4(+). It carries out the reaction UTP + NH4(+) + ATP = CTP + ADP + phosphate + 2 H(+). It participates in pyrimidine metabolism; CTP biosynthesis via de novo pathway; CTP from UDP: step 2/2. With respect to regulation, allosterically activated by GTP, when glutamine is the substrate; GTP has no effect on the reaction when ammonia is the substrate. The allosteric effector GTP functions by stabilizing the protein conformation that binds the tetrahedral intermediate(s) formed during glutamine hydrolysis. Inhibited by the product CTP, via allosteric rather than competitive inhibition. Functionally, catalyzes the ATP-dependent amination of UTP to CTP with either L-glutamine or ammonia as the source of nitrogen. Regulates intracellular CTP levels through interactions with the four ribonucleotide triphosphates. This Shewanella loihica (strain ATCC BAA-1088 / PV-4) protein is CTP synthase.